We begin with the raw amino-acid sequence, 323 residues long: E3 ubiquitin-protein ligase makorin (323 aa).

2 C3H1-type zinc fingers span residues 1–28 (MSDRILCKFFVHGSCLKGENCEFSHDSK) and 29–56 (DPPNNVCTFYQKRICLYGSRCRYDHVRA). Residues 62-74 (LSSDSESLDRSIS) are compositionally biased toward low complexity. The segment at 62–92 (LSSDSESLDRSISTTPSRHLQQQGDNNDGDK) is disordered. A compositionally biased stretch (polar residues) spans 75–87 (TTPSRHLQQQGDN). The C3H1-type 3 zinc finger occupies 101–128 (PREYPICSFAAAGDCPRGNQCPHMHGDL). Positions 129 to 158 (CNTCGKKCLHPFRPEEREEHTKECEKKQKH) are makorin-type Cys-His. The RING-type zinc-finger motif lies at 170–228 (CSVCLDRILSKATPGERKFGLLTECDHPFCIQCIRNWRSSAPVSGMDVNSTLRACPICR). The C3H1-type 4 zinc-finger motif lies at 257–286 (KLRSIDCKHFNFGNGNCPFGASCFYKHAYS).

It catalyses the reaction S-ubiquitinyl-[E2 ubiquitin-conjugating enzyme]-L-cysteine + [acceptor protein]-L-lysine = [E2 ubiquitin-conjugating enzyme]-L-cysteine + N(6)-ubiquitinyl-[acceptor protein]-L-lysine.. It functions in the pathway protein modification; protein ubiquitination. In terms of biological role, E3 ubiquitin ligase catalyzing the covalent attachment of ubiquitin moieties onto substrate proteins. This Arabidopsis thaliana (Mouse-ear cress) protein is E3 ubiquitin-protein ligase makorin (MKRN).